A 262-amino-acid chain; its full sequence is Intron-encoded DNA endonuclease ai2b (262 aa).

It belongs to the LAGLIDADG endonuclease family.

It localises to the mitochondrion. Mitochondrial DNA endonuclease involved in intron homing. In Dictyostelium discoideum (Social amoeba), this protein is Intron-encoded DNA endonuclease ai2b (ai2b).